We begin with the raw amino-acid sequence, 403 residues long: Argininosuccinate synthase (403 aa).

10–18 (AYSGGLDTS) is a binding site for ATP. Tyr-87 contributes to the L-citrulline binding site. Gly-117 provides a ligand contact to ATP. Thr-119, Asn-123, and Asp-124 together coordinate L-aspartate. Asn-123 is a binding site for L-citrulline. The L-citrulline site is built by Arg-127, Ser-175, Ser-184, Glu-260, and Tyr-272.

It belongs to the argininosuccinate synthase family. Type 1 subfamily. Homotetramer.

The protein localises to the cytoplasm. The catalysed reaction is L-citrulline + L-aspartate + ATP = 2-(N(omega)-L-arginino)succinate + AMP + diphosphate + H(+). It functions in the pathway amino-acid biosynthesis; L-arginine biosynthesis; L-arginine from L-ornithine and carbamoyl phosphate: step 2/3. This chain is Argininosuccinate synthase, found in Bacillus licheniformis (strain ATCC 14580 / DSM 13 / JCM 2505 / CCUG 7422 / NBRC 12200 / NCIMB 9375 / NCTC 10341 / NRRL NRS-1264 / Gibson 46).